Here is a 358-residue protein sequence, read N- to C-terminus: Biotin synthase (358 aa).

The Radical SAM core domain maps to 47 to 306 (KNNSKIKLCA…ALYKIIMPYA (260 aa)). Residues Cys-65, Cys-69, and Cys-72 each contribute to the [4Fe-4S] cluster site. [2Fe-2S] cluster is bound by residues Ser-142, Cys-174, Cys-233, and Arg-309.

It belongs to the radical SAM superfamily. Biotin synthase family. In terms of assembly, homodimer. The cofactor is [4Fe-4S] cluster. [2Fe-2S] cluster is required as a cofactor.

It carries out the reaction (4R,5S)-dethiobiotin + (sulfur carrier)-SH + 2 reduced [2Fe-2S]-[ferredoxin] + 2 S-adenosyl-L-methionine = (sulfur carrier)-H + biotin + 2 5'-deoxyadenosine + 2 L-methionine + 2 oxidized [2Fe-2S]-[ferredoxin]. The protein operates within cofactor biosynthesis; biotin biosynthesis; biotin from 7,8-diaminononanoate: step 2/2. Functionally, catalyzes the conversion of dethiobiotin (DTB) to biotin by the insertion of a sulfur atom into dethiobiotin via a radical-based mechanism. The chain is Biotin synthase from Methanocaldococcus jannaschii (strain ATCC 43067 / DSM 2661 / JAL-1 / JCM 10045 / NBRC 100440) (Methanococcus jannaschii).